A 508-amino-acid chain; its full sequence is Cobyric acid synthase (508 aa).

A GATase cobBQ-type domain is found at 266–464 (SLRIAVVAYP…AHGLFESTEV (199 aa)). The Nucleophile role is filled by Cys-347. His-456 is an active-site residue.

It belongs to the CobB/CobQ family. CobQ subfamily.

It functions in the pathway cofactor biosynthesis; adenosylcobalamin biosynthesis. Catalyzes amidations at positions B, D, E, and G on adenosylcobyrinic A,C-diamide. NH(2) groups are provided by glutamine, and one molecule of ATP is hydrogenolyzed for each amidation. The protein is Cobyric acid synthase of Methylibium petroleiphilum (strain ATCC BAA-1232 / LMG 22953 / PM1).